The primary structure comprises 213 residues: NADH-quinone oxidoreductase subunit B 1 (213 aa).

The [4Fe-4S] cluster site is built by Cys-82, Cys-83, Cys-148, and Cys-177.

It belongs to the complex I 20 kDa subunit family. NDH-1 is composed of 14 different subunits. Subunits NuoB, C, D, E, F, and G constitute the peripheral sector of the complex. Requires [4Fe-4S] cluster as cofactor.

It localises to the cell inner membrane. The catalysed reaction is a quinone + NADH + 5 H(+)(in) = a quinol + NAD(+) + 4 H(+)(out). Functionally, NDH-1 shuttles electrons from NADH, via FMN and iron-sulfur (Fe-S) centers, to quinones in the respiratory chain. The immediate electron acceptor for the enzyme in this species is believed to be ubiquinone. Couples the redox reaction to proton translocation (for every two electrons transferred, four hydrogen ions are translocated across the cytoplasmic membrane), and thus conserves the redox energy in a proton gradient. In Koribacter versatilis (strain Ellin345), this protein is NADH-quinone oxidoreductase subunit B 1.